Reading from the N-terminus, the 162-residue chain is Caveolin-2 (162 aa).

Over 1-86 the chain is Cytoplasmic; the sequence is MGLETEKADV…FEISKYVMYK (86 aa). The residue at position 19 (Tyr-19) is a Phosphotyrosine; by SRC. Phosphoserine is present on residues Ser-20 and Ser-23. Tyr-27 is subject to Phosphotyrosine. Ser-36 bears the Phosphoserine mark. An intramembrane region (helical) is located at residues 87 to 107; that stretch reads FLTVFLAIPLAFIAGILFATL. The Cytoplasmic segment spans residues 108–162; sequence SCLHIWILMPFVKTCLMVLPSVQTIWKSVTDVVIGPLCTSVGRSFSSVSMQLSHD.

The protein belongs to the caveolin family. Monomer or homodimer. Interacts with CAV1; the interaction forms a stable heterooligomeric complex that is required for targeting to lipid rafts and for caveolae formation. Tyrosine phosphorylated forms do not form heterooligomers with the Tyr-19-phosphorylated form existing as a monomer or dimer, and the Tyr-27-form as a monomer only. Interacts (tyrosine phosphorylated form) with the SH2 domain-containing proteins, RASA1, NCK1 and SRC. Interacts (tyrosine phosphorylated form) with INSR, the interaction (Tyr-27-phosphorylated form) is increased on insulin stimulation. Interacts (Tyr-19 phosphorylated form) with MAPK1 (phosphorylated form); the interaction, promoted by insulin, leads to nuclear location and MAPK1 activation. Interacts with STAT3; the interaction is increased on insulin-induced tyrosine phosphorylation leading to STAT activation. Phosphorylated on serine and tyrosine residues. CAV1 promotes phosphorylation on Ser-23 which then targets the complex to the plasma membrane, lipid rafts and caveolae. Phosphorylation on Ser-36 appears to modulate mitosis in endothelial cells. Phosphorylation on both Tyr-19 and Tyr-27 is required for insulin-induced 'Ser-727' phosphorylation of STAT3 and its activation. Phosphorylation on Tyr-19 is required for insulin-induced phosphorylation of MAPK1 and DNA binding of STAT3. Tyrosine phosphorylation is induced by both EGF and insulin.

Its subcellular location is the nucleus. The protein resides in the cytoplasm. It localises to the golgi apparatus membrane. The protein localises to the cell membrane. It is found in the membrane. Its subcellular location is the caveola. Functionally, may act as a scaffolding protein within caveolar membranes. Interacts directly with G-protein alpha subunits and can functionally regulate their activity. Acts as an accessory protein in conjunction with CAV1 in targeting to lipid rafts and driving caveolae formation. The Ser-36 phosphorylated form has a role in modulating mitosis in endothelial cells. Positive regulator of cellular mitogenesis of the MAPK signaling pathway. Required for the insulin-stimulated nuclear translocation and activation of MAPK1 and STAT3, and the subsequent regulation of cell cycle progression. This Mus musculus (Mouse) protein is Caveolin-2 (Cav2).